Here is a 614-residue protein sequence, read N- to C-terminus: Membrane protein insertase YidC (614 aa).

Residues 6–26 (IVLLIIFSTSLLFLWDAWIKE) traverse the membrane as a helical segment. Polar residues-rich tracts occupy residues 34–48 (PAIT…STQS) and 60–70 (ELTSSQASPDT). Residues 34 to 87 (PAITQADSSAGSTQSRNDDSLPVPGSELTSSQASPDTNGIPASGGNGDSVTPRL) are disordered. The next 4 helical transmembrane spans lie at 380–400 (WGVA…PLSA), 450–470 (FPIL…LAAV), 484–504 (LSSP…MFVQ), and 524–544 (PVAF…YSLV). The tract at residues 562-614 (TAPSKDTPEPPVSKQVNSSENPETTANSPADSPKQPQTPANNPRKMYKRTRKK) is disordered. Residues 575–602 (KQVNSSENPETTANSPADSPKQPQTPAN) are compositionally biased toward polar residues.

The protein belongs to the OXA1/ALB3/YidC family. Type 1 subfamily. As to quaternary structure, interacts with the Sec translocase complex via SecD. Specifically interacts with transmembrane segments of nascent integral membrane proteins during membrane integration.

It is found in the cell inner membrane. Functionally, required for the insertion and/or proper folding and/or complex formation of integral membrane proteins into the membrane. Involved in integration of membrane proteins that insert both dependently and independently of the Sec translocase complex, as well as at least some lipoproteins. Aids folding of multispanning membrane proteins. This chain is Membrane protein insertase YidC, found in Nitrosomonas europaea (strain ATCC 19718 / CIP 103999 / KCTC 2705 / NBRC 14298).